The sequence spans 111 residues: Ribosome-binding factor A (111 aa).

The protein belongs to the RbfA family. Monomer. Binds 30S ribosomal subunits, but not 50S ribosomal subunits or 70S ribosomes.

The protein localises to the cytoplasm. In terms of biological role, one of several proteins that assist in the late maturation steps of the functional core of the 30S ribosomal subunit. Associates with free 30S ribosomal subunits (but not with 30S subunits that are part of 70S ribosomes or polysomes). Required for efficient processing of 16S rRNA. May interact with the 5'-terminal helix region of 16S rRNA. In Helicobacter pylori (strain HPAG1), this protein is Ribosome-binding factor A.